The following is a 37-amino-acid chain: Large ribosomal subunit protein bL36c (37 aa).

Belongs to the bacterial ribosomal protein bL36 family.

The protein resides in the plastid. Its subcellular location is the chloroplast. The chain is Large ribosomal subunit protein bL36c (rpl36) from Cyanidium caldarium (Red alga).